A 160-amino-acid polypeptide reads, in one-letter code: Urease accessory protein UreE (160 aa).

It belongs to the UreE family.

It is found in the cytoplasm. Functionally, involved in urease metallocenter assembly. Binds nickel. Probably functions as a nickel donor during metallocenter assembly. This Acinetobacter baumannii (strain AB307-0294) protein is Urease accessory protein UreE.